The chain runs to 283 residues: Acetylglutamate kinase (283 aa).

Substrate-binding positions include 63-64 (GG), Arg85, and Asn178.

The protein belongs to the acetylglutamate kinase family. ArgB subfamily.

The protein localises to the cytoplasm. The catalysed reaction is N-acetyl-L-glutamate + ATP = N-acetyl-L-glutamyl 5-phosphate + ADP. It functions in the pathway amino-acid biosynthesis; L-arginine biosynthesis; N(2)-acetyl-L-ornithine from L-glutamate: step 2/4. Its function is as follows. Catalyzes the ATP-dependent phosphorylation of N-acetyl-L-glutamate. In Prochlorococcus marinus (strain AS9601), this protein is Acetylglutamate kinase.